Reading from the N-terminus, the 707-residue chain is MKTFSESHKTVFVVDHCPYMSESCRQHVEFDMLTKNRTQGIIPLAPISKSLWTCAIEASMEYCRIMYDIFPFRKLVNFIVSDSGSRTLNSWNQEDQNLQELMAALAVIGPPNPRADPECCSILHGLVEAVESLCKITDYQHESRTELMENADRVANRGRIICITNAKSDSHVQMLEDCVNETIHEHNKLAAGSDHLMQIQKCHLVLIHTYPVGEDSLVSDRPKKELSNVLISEVHSVKAGRHLSTKLNQLVQLHFDLASTTITNIPMKEEQHANTSANYDVELLHHKEAHVEFNKSAGEGYNGSSSRENCLKETVTLKWCTPRTNSVELHYCTGAFRISPVDVNSRPSSCLTNFLLNGRSVLLEQPRKSGSKVISHMLSSHGGEIFLHVLSSSRSILEDPPSISEGCGGRVTDYRITDFGEFMRENRLMPFAEPRYCMDGGPEVPLERAKEQLERHTRYWPMIISQTTIFNMQAVVPLASVIVKESLSEEDVLNCQKTIYNLVDMERKNDPLPISTAGTRGKGPKRDEQYRIMWNELETLVRAHVRGSDRHQRVMDCLMACRSKPPEEEERKKRGRKREDKEEKAEKPPKENEHEKKWQESERVKSVLDREKEDLAEAEVIKDSPDSPEPPNKKPHIMVEDTGPAEKSKGPMSLLSLWSSRINTANSRKHQEFVGRLNSVNNKAELYQHLKEENGAEGVENGKGSRQ.

Over residues 565–625 the composition is skewed to basic and acidic residues; that stretch reads PPEEEERKKR…AEAEVIKDSP (61 aa). The tract at residues 565–651 is disordered; sequence PPEEEERKKR…TGPAEKSKGP (87 aa). Positions 567 to 622 form a coiled coil; it reads EEEERKKRGRKREDKEEKAEKPPKENEHEKKWQESERVKSVLDREKEDLAEAEVIK. The Nuclear localization signal (NLS) signature appears at 573–583; it reads KRGRKREDKEE. The segment at 650-695 is cleavage module binding motif (CMBM); sequence GPMSLLSLWSSRINTANSRKHQEFVGRLNSVNNKAELYQHLKEENG.

The protein belongs to the Integrator subunit 13 family. Component of the Integrator complex, composed of core subunits INTS1, INTS2, INTS3, INTS4, INTS5, INTS6, INTS7, INTS8, INTS9/RC74, INTS10, INTS11/CPSF3L, INTS12, INTS13, INTS14 and INTS15. The core complex associates with protein phosphatase 2A subunits PPP2CA and PPP2R1A, to form the Integrator-PP2A (INTAC) complex. INTS13 is part of the tail subcomplex, composed of INTS10, INTS13, INTS14 and INTS15.

It localises to the nucleus. Its subcellular location is the cytoplasm. Component of the integrator complex, a multiprotein complex that terminates RNA polymerase II (Pol II) transcription in the promoter-proximal region of genes. The integrator complex provides a quality checkpoint during transcription elongation by driving premature transcription termination of transcripts that are unfavorably configured for transcriptional elongation: the complex terminates transcription by (1) catalyzing dephosphorylation of the C-terminal domain (CTD) of Pol II subunit POLR2A/RPB1 and SUPT5H/SPT5, (2) degrading the exiting nascent RNA transcript via endonuclease activity and (3) promoting the release of Pol II from bound DNA. The integrator complex is also involved in terminating the synthesis of non-coding Pol II transcripts, such as enhancer RNAs (eRNAs), small nuclear RNAs (snRNAs), telomerase RNAs and long non-coding RNAs (lncRNAs). Within the integrator complex, INTS13 is part of the integrator tail module and acts as a platform for the recruitment of transcription factors at promoters. The chain is Integrator complex subunit 13 from Xenopus tropicalis (Western clawed frog).